The sequence spans 411 residues: Na(+)-translocating NADH-quinone reductase subunit F (411 aa).

The helical transmembrane segment at 6-26 (AIGGVAMFTLIIMGLVAIILA) threads the bilayer. A 2Fe-2S ferredoxin-type domain is found at 35-129 (GDVTIHINDN…DMKIEIDPEF (95 aa)). Residues C72, C78, C81, and C113 each contribute to the [2Fe-2S] cluster site. Residues 132–273 (VQKWECEVIS…SGPYGEFFAK (142 aa)) enclose the FAD-binding FR-type domain.

It belongs to the NqrF family. As to quaternary structure, composed of six subunits; NqrA, NqrB, NqrC, NqrD, NqrE and NqrF. It depends on [2Fe-2S] cluster as a cofactor. The cofactor is FAD.

Its subcellular location is the cell inner membrane. The catalysed reaction is a ubiquinone + n Na(+)(in) + NADH + H(+) = a ubiquinol + n Na(+)(out) + NAD(+). NQR complex catalyzes the reduction of ubiquinone-1 to ubiquinol by two successive reactions, coupled with the transport of Na(+) ions from the cytoplasm to the periplasm. The first step is catalyzed by NqrF, which accepts electrons from NADH and reduces ubiquinone-1 to ubisemiquinone by a one-electron transfer pathway. This chain is Na(+)-translocating NADH-quinone reductase subunit F, found in Psychrobacter cryohalolentis (strain ATCC BAA-1226 / DSM 17306 / VKM B-2378 / K5).